The primary structure comprises 150 residues: 3-dehydroquinate dehydratase (150 aa).

Tyrosine 26 serves as the catalytic Proton acceptor. Asparagine 77, histidine 83, and aspartate 90 together coordinate substrate. Histidine 103 serves as the catalytic Proton donor. Substrate contacts are provided by residues leucine 104–serine 105 and arginine 114.

The protein belongs to the type-II 3-dehydroquinase family. As to quaternary structure, homododecamer.

It catalyses the reaction 3-dehydroquinate = 3-dehydroshikimate + H2O. The protein operates within metabolic intermediate biosynthesis; chorismate biosynthesis; chorismate from D-erythrose 4-phosphate and phosphoenolpyruvate: step 3/7. Functionally, catalyzes a trans-dehydration via an enolate intermediate. The polypeptide is 3-dehydroquinate dehydratase (Vibrio cholerae serotype O1 (strain ATCC 39541 / Classical Ogawa 395 / O395)).